Here is a 931-residue protein sequence, read N- to C-terminus: Beta-mannosidase A (931 aa).

An N-terminal signal peptide occupies residues 1 to 21; sequence MRHSIGLAAALLAPTLPVALG. 7 N-linked (GlcNAc...) asparagine glycosylation sites follow: Asn-40, Asn-79, Asn-247, Asn-282, Asn-316, Asn-326, and Asn-347. The Proton donor role is filled by Glu-479. Residues Asn-550, Asn-608, Asn-658, Asn-738, Asn-790, Asn-798, Asn-830, and Asn-918 are each glycosylated (N-linked (GlcNAc...) asparagine).

The protein belongs to the glycosyl hydrolase 2 family. Beta-mannosidase A subfamily. As to quaternary structure, homodimer.

It localises to the secreted. The catalysed reaction is Hydrolysis of terminal, non-reducing beta-D-mannose residues in beta-D-mannosides.. It participates in glycan metabolism; N-glycan degradation. Functionally, exoglycosidase that cleaves the single beta-linked mannose residue from the non-reducing end of beta-mannosidic oligosaccharides of various complexity and length. Involved in the degradation of polymeric mannan and galactomannan. This chain is Beta-mannosidase A (mndA), found in Aspergillus niger (strain ATCC MYA-4892 / CBS 513.88 / FGSC A1513).